The sequence spans 280 residues: MMPLGLFPLPRAAVVLLISLLTLPAQAAERVISLSPSTTELAYAAGLGDKLVAVSAYSDYPESAKKLEHVASWQGINVERILALKPDLILAWRGGNPQRPLDQLAALGIPIFYSDPTHIDQIASDLDKLAQYSPHPEQAHQAAEQFRQHVNTLRDRYARSQPKRTFLQFGTQPLFTSSGHTLQSEVVSLCGGENIFADSRVPWPQVSREQVMTRKPQVIVVSGTQSQVDNVSAFWLPQLVVPVIALNEDWFNRASPRILLAAQQLCQQMASIPTPVAESH.

The first 27 residues, Met1 to Ala27, serve as a signal peptide directing secretion. Residues Arg30 to Ala277 enclose the Fe/B12 periplasmic-binding domain. Cyanocob(III)alamin is bound at residue Tyr57. Residues Cys190 and Cys266 are joined by a disulfide bond.

Belongs to the BtuF family. As to quaternary structure, the complex is composed of two ATP-binding proteins (BtuD), two transmembrane proteins (BtuC) and a solute-binding protein (BtuF).

The protein resides in the periplasm. Its function is as follows. Part of the ABC transporter complex BtuCDF involved in vitamin B12 import. Binds vitamin B12 and delivers it to the periplasmic surface of BtuC. In Yersinia pseudotuberculosis serotype O:1b (strain IP 31758), this protein is Vitamin B12-binding protein.